The primary structure comprises 127 residues: Large ribosomal subunit protein bL17 (127 aa).

This sequence belongs to the bacterial ribosomal protein bL17 family. As to quaternary structure, part of the 50S ribosomal subunit. Contacts protein L32.

In Mannheimia succiniciproducens (strain KCTC 0769BP / MBEL55E), this protein is Large ribosomal subunit protein bL17.